The following is a 472-amino-acid chain: Pentatricopeptide repeat-containing protein At5g46100 (472 aa).

PPR repeat units lie at residues 50–84 (DQSSFGYMVLRLVSANKFKAAEDLIVRMKIENCVV), 85–119 (SEDILLSICRGYGRVHRPFDSLRVFHKMKDFDCDP), 120–154 (SQKAYVTVLAILVEENQLNLAFKFYKNMREIGLPP), 155–190 (TVASLNVLIKALCRNDGTVDAGLKIFLEMPKRGCDP), 191–225 (DSYTYGTLISGLCRFGRIDEAKKLFTEMVEKDCAP), 226–260 (TVVTYTSLINGLCGSKNVDEAMRYLEEMKSKGIEP), 261–295 (NVFTYSSLMDGLCKDGRSLQAMELFEMMMARGCRP), 296–330 (NMVTYTTLITGLCKEQKIQEAVELLDRMNLQGLKP), 331–365 (DAGLYGKVISGFCAISKFREAANFLDEMILGGITP), 373–406 (HVKTSNEVVRGLCANYPSRAFTLYLSMRSRGISV), and 407–441 (EVETLESLVKCLCKKGEFQKAVQLVDEIVTDGCIP).

The protein belongs to the PPR family. P subfamily.

The polypeptide is Pentatricopeptide repeat-containing protein At5g46100 (Arabidopsis thaliana (Mouse-ear cress)).